The chain runs to 355 residues: Gibberellin 3-beta-dioxygenase 4 (355 aa).

Residues 203–303 (GRGAIRLNHY…RISIAYLWGG (101 aa)) enclose the Fe2OG dioxygenase domain. The Fe cation site is built by histidine 227, aspartate 229, and histidine 284. Arginine 294 is an active-site residue.

It belongs to the iron/ascorbate-dependent oxidoreductase family. GA3OX subfamily. The cofactor is L-ascorbate. Fe cation serves as cofactor. Expressed in siliques and in seeds, specifically at the rim of the embryo and the outer integument. Also expressed in flowers. Not detected in roots, stems and leaves.

The catalysed reaction is gibberellin A20 + 2-oxoglutarate + O2 = gibberellin A1 + succinate + CO2. It participates in plant hormone biosynthesis; gibberellin biosynthesis. Converts the inactive gibberellin (GA) precursors GA9 and GA20 in the bioactives gibberellins GA4 and GA1. Involved in the production of bioactive GA for reproductive development. This is Gibberellin 3-beta-dioxygenase 4 from Arabidopsis thaliana (Mouse-ear cress).